Consider the following 216-residue polypeptide: ATP-dependent Clp protease proteolytic subunit 1 (216 aa).

S119 (nucleophile) is an active-site residue. H144 is an active-site residue.

It belongs to the peptidase S14 family. Fourteen ClpP subunits assemble into 2 heptameric rings which stack back to back to give a disk-like structure with a central cavity, resembling the structure of eukaryotic proteasomes.

The protein localises to the cytoplasm. The catalysed reaction is Hydrolysis of proteins to small peptides in the presence of ATP and magnesium. alpha-casein is the usual test substrate. In the absence of ATP, only oligopeptides shorter than five residues are hydrolyzed (such as succinyl-Leu-Tyr-|-NHMec, and Leu-Tyr-Leu-|-Tyr-Trp, in which cleavage of the -Tyr-|-Leu- and -Tyr-|-Trp bonds also occurs).. Cleaves peptides in various proteins in a process that requires ATP hydrolysis. Has a chymotrypsin-like activity. Plays a major role in the degradation of misfolded proteins. This chain is ATP-dependent Clp protease proteolytic subunit 1, found in Cutibacterium acnes (strain DSM 16379 / KPA171202) (Propionibacterium acnes).